An 860-amino-acid chain; its full sequence is Leucine--tRNA ligase (860 aa).

The 'HIGH' region signature appears at 42–52 (PYPSGRLHMGH). Positions 619–623 (KMSKS) match the 'KMSKS' region motif. Lys-622 provides a ligand contact to ATP.

This sequence belongs to the class-I aminoacyl-tRNA synthetase family.

Its subcellular location is the cytoplasm. The enzyme catalyses tRNA(Leu) + L-leucine + ATP = L-leucyl-tRNA(Leu) + AMP + diphosphate. This is Leucine--tRNA ligase from Escherichia coli O9:H4 (strain HS).